The sequence spans 222 residues: Sortase A (222 aa).

Topologically, residues 1-7 (MLKKTIA) are cytoplasmic. The helical transmembrane segment at 8–28 (IIILIIGLLLIFSPFIKNGIV) threads the bilayer. Over 29-222 (KYMSGHETIE…ELENKYFPSK (194 aa)) the chain is Extracellular. Residue His-127 is the Proton donor/acceptor of the active site. The active-site Acyl-thioester intermediate is the Cys-188.

The protein belongs to the bacterial sortase family. Class A subfamily.

It localises to the cell membrane. Activity is enhanced by Zn(2+) and strongly enhanced by Ca(2+). Inhibited by chalcone, a precursor of several flavonoids, which blocks the SrtA active site. Functionally, transpeptidase that anchors surface proteins to the cell wall. Recognizes and modifies its substrate by proteolytic cleavage of a C-terminal sorting signal. Following cleavage, a covalent intermediate is formed via a thioester bond between the sortase and its substrate, which is then transferred and covalently attached to the cell wall. This sortase recognizes a Leu-Pro-x-Thr-Gly (LPXTG) motif, which is cleaved by the sortase between the threonine and glycine residues. Involved in pathogenesis. May regulate the rate of synthesis and/or the stability of a subset of LPXTG proteins. Not involved in cell wall-anchoring of Hbp2 (SvpA) or Hbp1. This Listeria monocytogenes serovar 1/2a (strain ATCC BAA-679 / EGD-e) protein is Sortase A.